The sequence spans 227 residues: Cytochrome c oxidase subunit 2 (227 aa).

Topologically, residues 1–14 (MAYPFQLGLQDATS) are mitochondrial intermembrane. Residues 15–45 (PIMEELLHFHDHTLMIVFLISSLILYIISLM) form a helical membrane-spanning segment. The Mitochondrial matrix segment spans residues 46-59 (LTTKLTHTSTMDAQ). The chain crosses the membrane as a helical span at residues 60–87 (EVETVWTILPAIILILIALPSLRILYMM). Residues 88–227 (DEINNPSLTV…YFETWSALMV (140 aa)) lie on the Mitochondrial intermembrane side of the membrane. Cu cation contacts are provided by His-161, Cys-196, Glu-198, Cys-200, His-204, and Met-207. Glu-198 lines the Mg(2+) pocket. Tyr-218 is subject to Phosphotyrosine.

Belongs to the cytochrome c oxidase subunit 2 family. Component of the cytochrome c oxidase (complex IV, CIV), a multisubunit enzyme composed of 14 subunits. The complex is composed of a catalytic core of 3 subunits MT-CO1, MT-CO2 and MT-CO3, encoded in the mitochondrial DNA, and 11 supernumerary subunits COX4I, COX5A, COX5B, COX6A, COX6B, COX6C, COX7A, COX7B, COX7C, COX8 and NDUFA4, which are encoded in the nuclear genome. The complex exists as a monomer or a dimer and forms supercomplexes (SCs) in the inner mitochondrial membrane with NADH-ubiquinone oxidoreductase (complex I, CI) and ubiquinol-cytochrome c oxidoreductase (cytochrome b-c1 complex, complex III, CIII), resulting in different assemblies (supercomplex SCI(1)III(2)IV(1) and megacomplex MCI(2)III(2)IV(2)). Found in a complex with TMEM177, COA6, COX18, COX20, SCO1 and SCO2. Interacts with TMEM177 in a COX20-dependent manner. Interacts with COX20. Interacts with COX16. It depends on Cu cation as a cofactor.

The protein resides in the mitochondrion inner membrane. It catalyses the reaction 4 Fe(II)-[cytochrome c] + O2 + 8 H(+)(in) = 4 Fe(III)-[cytochrome c] + 2 H2O + 4 H(+)(out). Component of the cytochrome c oxidase, the last enzyme in the mitochondrial electron transport chain which drives oxidative phosphorylation. The respiratory chain contains 3 multisubunit complexes succinate dehydrogenase (complex II, CII), ubiquinol-cytochrome c oxidoreductase (cytochrome b-c1 complex, complex III, CIII) and cytochrome c oxidase (complex IV, CIV), that cooperate to transfer electrons derived from NADH and succinate to molecular oxygen, creating an electrochemical gradient over the inner membrane that drives transmembrane transport and the ATP synthase. Cytochrome c oxidase is the component of the respiratory chain that catalyzes the reduction of oxygen to water. Electrons originating from reduced cytochrome c in the intermembrane space (IMS) are transferred via the dinuclear copper A center (CU(A)) of subunit 2 and heme A of subunit 1 to the active site in subunit 1, a binuclear center (BNC) formed by heme A3 and copper B (CU(B)). The BNC reduces molecular oxygen to 2 water molecules using 4 electrons from cytochrome c in the IMS and 4 protons from the mitochondrial matrix. This is Cytochrome c oxidase subunit 2 (MT-CO2) from Canis simensis (Ethiopian wolf).